Reading from the N-terminus, the 151-residue chain is Large ribosomal subunit protein uL13 (151 aa).

The protein belongs to the universal ribosomal protein uL13 family. As to quaternary structure, part of the 50S ribosomal subunit.

Functionally, this protein is one of the early assembly proteins of the 50S ribosomal subunit, although it is not seen to bind rRNA by itself. It is important during the early stages of 50S assembly. This chain is Large ribosomal subunit protein uL13, found in Mycoplasma mycoides subsp. mycoides SC (strain CCUG 32753 / NCTC 10114 / PG1).